A 171-amino-acid polypeptide reads, in one-letter code: Ribosome maturation factor RimM (171 aa).

A PRC barrel domain is found at 97-169 (DGEFYYHEII…RVDVDIMEGL (73 aa)).

The protein belongs to the RimM family. In terms of assembly, binds ribosomal protein uS19.

The protein localises to the cytoplasm. Functionally, an accessory protein needed during the final step in the assembly of 30S ribosomal subunit, possibly for assembly of the head region. Essential for efficient processing of 16S rRNA. May be needed both before and after RbfA during the maturation of 16S rRNA. It has affinity for free ribosomal 30S subunits but not for 70S ribosomes. This chain is Ribosome maturation factor RimM, found in Lactococcus lactis subsp. cremoris (strain MG1363).